The primary structure comprises 211 residues: Leucine efflux protein (211 aa).

A run of 6 helical transmembrane segments spans residues 5–25 (FGVLNFWTYVVGAFFIVLVPG), 49–69 (GVFIGDAVLMFLAWAGVAALI), 72–92 (TPVLFNIVRYLGALYLLWLGG), 122–142 (VLSLTNPKAILFYVSFFVQFI), 153–173 (FLILATTLELISFMYMSFLIF), and 191–211 (LGNGLIGLLFVGFAARLASLH).

This sequence belongs to the Rht family.

It is found in the cell inner membrane. It carries out the reaction L-leucine(in) + H(+)(out) = L-leucine(out) + H(+)(in). Functionally, exporter of leucine. The protein is Leucine efflux protein (leuE) of Enterobacter sp. (strain 638).